The primary structure comprises 956 residues: UvrABC system protein A (956 aa).

G33–S40 is an ATP binding site. The C4-type zinc finger occupies C252 to C279. ABC transporter domains follow at residues W309–I587 and G607–K936. G639–S646 is an ATP binding site. The segment at C738 to C764 adopts a C4-type zinc-finger fold.

It belongs to the ABC transporter superfamily. UvrA family. In terms of assembly, forms a heterotetramer with UvrB during the search for lesions.

The protein localises to the cytoplasm. In terms of biological role, the UvrABC repair system catalyzes the recognition and processing of DNA lesions. UvrA is an ATPase and a DNA-binding protein. A damage recognition complex composed of 2 UvrA and 2 UvrB subunits scans DNA for abnormalities. When the presence of a lesion has been verified by UvrB, the UvrA molecules dissociate. This Listeria monocytogenes serovar 1/2a (strain ATCC BAA-679 / EGD-e) protein is UvrABC system protein A.